Here is a 1461-residue protein sequence, read N- to C-terminus: Periaxin (1461 aa).

Ser-7 carries the phosphoserine modification. The 84-residue stretch at 16 to 99 (LVEIIVETEA…YKVSFCLKRT (84 aa)) folds into the PDZ domain. The Nuclear export signal signature appears at 70 to 84 (VFFENFKYEDALRLL). Positions 118 to 196 (KGPRAKVAKL…RLQLPRLRVR (79 aa)) match the Nuclear localization signal motif. A Phosphoserine modification is found at Ser-133. A run of 55 repeats spans residues 431-435 (GPEVK), 439-443 (GPEVK), 447-451 (APEVK), 455-459 (VPEAA), 463-467 (VRLPE), 468-472 (VELPK), 473-477 (VSEMK), 481-485 (VPEMA), 486-490 (VPEVR), 494-498 (VELPK), 499-503 (VSEMK), 507-511 (VPEMA), 512-516 (VPEVR), 520-524 (VQLLK), 525-529 (VSEMK), 533-537 (VPEMA), 538-542 (VPEVR), 546-550 (VQLPK), 551-555 (VSEMK), 559-563 (VSEVA), 564-568 (VPEVR), 572-576 (VQLPK), 577-581 (VPEMK), 582-586 (VPEMK), 590-594 (VPEMK), 595-599 (LPEMK), 600-604 (LPEVQ), 608-612 (VPEMA), 613-617 (VPDVH), 618-622 (LPEVQ), 626-630 (VPEMK), 631-635 (LPEMK), 636-640 (LPEVK), 644-648 (VPEMA), 649-653 (VPDVH), 654-658 (LPEVQ), 662-666 (VPEMK), 670-674 (MPEMA), 675-679 (VPEVR), 683-687 (VQLPK), 688-692 (VSEMK), 696-700 (VPEMA), 701-705 (VPDVH), 706-710 (LPEVQ), 714-718 (VCEMK), 719-723 (VPDMK), 724-728 (LPEIK), 732-736 (VPEMA), 737-741 (VPDVH), 742-746 (LPEVQ), 750-754 (VSEIR), 755-759 (LPEMQ), 760-764 (VPKVP), 771-775 (APEVK), and 779-783 (APEVQ). Residues 431-783 (GPEVKVPKGP…VKLPRAPEVQ (353 aa)) form a 55 X 5 AA approximate tandem repeats of [LVMAG]-[PSREQC]-[EDKL]-[LIVMAP]-[AQKHRPE]; that may have a tripeptide spacer of [LV]-P-[KER] region. A phosphoserine mark is found at Ser-900 and Ser-1082. Positions 1318-1327 (EGAEEGEKAK) are enriched in basic and acidic residues. Positions 1318-1461 (EGAEEGEKAK…RMEGAQAAAV (144 aa)) are disordered. A phosphoserine mark is found at Ser-1349, Ser-1351, Ser-1363, Ser-1401, Ser-1407, and Ser-1439. The segment covering 1352-1363 (PEEEEEEEEEGS) has biased composition (acidic residues).

The protein belongs to the periaxin family. As to quaternary structure, homodimer (via PDZ domain). Interacts with SCN10A. Found in a complex with SCN10A. Interacts with DRP2. Identified in a dystroglycan complex that contains at least PRX, DRP2, UTRN, DMD and DAG1. Detected in a complex composed of at least EZR, AHNAK, PPL and PRX. Identified in a complex with EZR, AHNAK, BFSP1, BFSP2, ANK2, PLEC, VIM and spectrin. Detected in spinal cord. Isoform 1 and isoform 2 are found in sciatic nerve and Schwann cells.

It localises to the cell membrane. It is found in the nucleus. The protein resides in the cytoplasm. The protein localises to the cell junction. Its function is as follows. Scaffolding protein that functions as part of a dystroglycan complex in Schwann cells, and as part of EZR and AHNAK-containing complexes in eye lens fiber cells. Required for the maintenance of the peripheral myelin sheath that is essential for normal transmission of nerve impulses and normal perception of sensory stimuli. Required for normal transport of MBP mRNA from the perinuclear to the paranodal regions. Required for normal remyelination after nerve injury. Required for normal elongation of Schwann cells and normal length of the internodes between the nodes of Ranvier. The demyelinated nodes of Ranvier permit saltatory transmission of nerve impulses; shorter internodes cause slower transmission of nerve impulses. Required for the formation of appositions between the abaxonal surface of the myelin sheath and the Schwann cell plasma membrane; the Schwann cell cytoplasm is restricted to regions between these appositions. Required for the formation of Cajal bands and of Schmidt-Lanterman incisures that correspond to short, cytoplasm-filled regions on myelinated nerves. Recruits DRP2 to the Schwann cell plasma membrane. Required for normal protein composition of the eye lens fiber cell plasma membrane and normal eye lens fiber cell morphology. The protein is Periaxin (PRX) of Homo sapiens (Human).